A 366-amino-acid polypeptide reads, in one-letter code: Beta sliding clamp (366 aa).

It belongs to the beta sliding clamp family. In terms of assembly, forms a ring-shaped head-to-tail homodimer around DNA which binds and tethers DNA polymerases and other proteins to the DNA. The DNA replisome complex has a single clamp-loading complex (3 tau and 1 each of delta, delta', psi and chi subunits) which binds 3 Pol III cores (1 core on the leading strand and 2 on the lagging strand) each with a beta sliding clamp dimer. Additional proteins in the replisome are other copies of gamma, psi and chi, Ssb, DNA helicase and RNA primase.

It localises to the cytoplasm. Confers DNA tethering and processivity to DNA polymerases and other proteins. Acts as a clamp, forming a ring around DNA (a reaction catalyzed by the clamp-loading complex) which diffuses in an ATP-independent manner freely and bidirectionally along dsDNA. Initially characterized for its ability to contact the catalytic subunit of DNA polymerase III (Pol III), a complex, multichain enzyme responsible for most of the replicative synthesis in bacteria; Pol III exhibits 3'-5' exonuclease proofreading activity. The beta chain is required for initiation of replication as well as for processivity of DNA replication. This Chlamydia muridarum (strain MoPn / Nigg) protein is Beta sliding clamp (dnaN).